We begin with the raw amino-acid sequence, 98 residues long: NADH-ubiquinone oxidoreductase chain 4L (98 aa).

Transmembrane regions (helical) follow at residues 1–21 (MPPI…GMLV), 29–49 (SLLC…TMAL), and 61–81 (IVLL…LVMV).

It belongs to the complex I subunit 4L family. As to quaternary structure, core subunit of respiratory chain NADH dehydrogenase (Complex I) which is composed of 45 different subunits.

It is found in the mitochondrion inner membrane. The enzyme catalyses a ubiquinone + NADH + 5 H(+)(in) = a ubiquinol + NAD(+) + 4 H(+)(out). In terms of biological role, core subunit of the mitochondrial membrane respiratory chain NADH dehydrogenase (Complex I) which catalyzes electron transfer from NADH through the respiratory chain, using ubiquinone as an electron acceptor. Part of the enzyme membrane arm which is embedded in the lipid bilayer and involved in proton translocation. The polypeptide is NADH-ubiquinone oxidoreductase chain 4L (MT-ND4L) (Orycteropus afer (Aardvark)).